The chain runs to 129 residues: Small ribosomal subunit protein uS11 (129 aa).

Belongs to the universal ribosomal protein uS11 family. In terms of assembly, part of the 30S ribosomal subunit. Interacts with proteins S7 and S18. Binds to IF-3.

Located on the platform of the 30S subunit, it bridges several disparate RNA helices of the 16S rRNA. Forms part of the Shine-Dalgarno cleft in the 70S ribosome. This is Small ribosomal subunit protein uS11 from Thermosipho melanesiensis (strain DSM 12029 / CIP 104789 / BI429).